A 538-amino-acid polypeptide reads, in one-letter code: MRHVQAELSPSSEPEAGPSQPPVTQGTLQGGLLMGYSPAGGATSPGVYQVSIFSPSAGVSEPPRALKRPAPSTEGPRELKRGPGLGAREGLPPEEPSTVGLVSPEGLGLGLGVASQHFSHHGLRVVEQGGSATSSWTSGTQSTPWPSSNASCNTLHTRDWAFPDQGGQGCLGESPGPAPSGQLHTLDTDLHNLAQIGGKSPVARVGNGSNPWPRESHGTANGHSPEHTPPGPGPPGPCPTKRRLLPAGEALDVSSEDEGPAPRRRRGTLGCPLAANSSDAKATPFWSHLLPGPKEPVLDPTDRSPMGRRLKGARRLKLSSLRTLRKGPGLLSPPSASPFPTPAVSRTLLGNFEESLLRGRFAPSGHIEGFTAEIGASGSYCPQHVTLPVTVTFFDVSEQNAPAPFLGVVDLNPLGRKGYSVPKVGTIQVTLFNPNQTVVKMFLVTFDFSDMPAAHMTFLRHRLFLVPVGEEGNVSPTHRLLCYLLHLRFRSSRSGRLSLHGDIRLLFSRRSLELDTGLPYELQAVTEAPHNPRYSPLP.

Disordered stretches follow at residues 1–103 (MRHV…GLVS), 130–149 (GSATSSWTSGTQSTPWPSSN), 163–185 (PDQGGQGCLGESPGPAPSGQLHT), and 199–272 (KSPV…LGCP). Low complexity predominate over residues 130-148 (GSATSSWTSGTQSTPWPSS). Residues 227–238 (HTPPGPGPPGPC) are compositionally biased toward pro residues. Phosphoserine is present on residues Ser254 and Ser255. A required for macropage invasion region spans residues 348 to 430 (LLGNFEESLL…VPKVGTIQVT (83 aa)). The interval 436–444 (QTVVKMFLV) is transactivation domain 1 (TAD1).

The protein belongs to the ATOS family.

The protein localises to the nucleus. Functionally, transcription regulator that may syncronize transcriptional and translational programs. The chain is Atos homolog protein B from Rattus norvegicus (Rat).